The sequence spans 228 residues: Urease accessory protein UreF (228 aa).

This sequence belongs to the UreF family. As to quaternary structure, ureD, UreF and UreG form a complex that acts as a GTP-hydrolysis-dependent molecular chaperone, activating the urease apoprotein by helping to assemble the nickel containing metallocenter of UreC. The UreE protein probably delivers the nickel.

The protein resides in the cytoplasm. Functionally, required for maturation of urease via the functional incorporation of the urease nickel metallocenter. The chain is Urease accessory protein UreF from Blochmanniella pennsylvanica (strain BPEN).